The following is a 229-amino-acid chain: Secretory carrier-associated membrane protein 4 (229 aa).

Residues 1–39 (MSEKENNFPPLPKFIPVKPCFYQNFSDEIPVEHQVLVKR) lie on the Cytoplasmic side of the membrane. 4 helical membrane-spanning segments follow: residues 40-60 (IYRL…ACLA), 61-81 (WWIG…LLLF), 105-125 (FMAF…QAIG), and 149-169 (VVML…AIAI). Residues 170–229 (MKVHRIYRGAGGSFQKAQTEWNTGTWRNPPSREAQYNNFSGNSLPEYPTVPSYPGSGQWP) lie on the Cytoplasmic side of the membrane. Thr-194 carries the post-translational modification Phosphothreonine. Residues 208–229 (FSGNSLPEYPTVPSYPGSGQWP) form a disordered region.

This sequence belongs to the SCAMP family.

It localises to the membrane. Functionally, probably involved in membrane protein trafficking. This chain is Secretory carrier-associated membrane protein 4 (SCAMP4), found in Pongo abelii (Sumatran orangutan).